The following is a 153-amino-acid chain: Arachidonate 5-lipoxygenase-activating protein (153 aa).

The Lumenal segment spans residues 1–8 (MDQEAMGN). The chain crosses the membrane as a helical span at residues 9–30 (IVLLAIVTLISVVQNAFFAHKV). Residues 31-52 (EHESKTHNGRSFQRTGTPAFER) lie on the Cytoplasmic side of the membrane. A helical membrane pass occupies residues 53 to 77 (VYTANQNCVDAYPTFLVVLWSAGLF). The Lumenal portion of the chain corresponds to 78–80 (CSQ). A helical transmembrane segment spans residues 81–102 (VPAAFAGLMYLFVRQKYFVGYL). The Cytoplasmic portion of the chain corresponds to 103–107 (GERTQ). Residues 108–115 (STPGYIFG) lie within the membrane without spanning it. Residues 116–128 (KRIILFLFLMSLA) form a helical membrane-spanning segment. Over 129-153 (GIFNYFLILFFGSDFENYIKTITTT) the chain is Lumenal.

Belongs to the MAPEG family. In terms of assembly, homotrimer. Interacts with LTC4S and ALOX5.

Its subcellular location is the nucleus membrane. The protein localises to the endoplasmic reticulum membrane. Required for leukotriene biosynthesis by ALOX5 (5-lipoxygenase). Anchors ALOX5 to the membrane. Binds arachidonic acid, and could play an essential role in the transfer of arachidonic acid to ALOX5. Binds to MK-886, a compound that blocks the biosynthesis of leukotrienes. In Sus scrofa (Pig), this protein is Arachidonate 5-lipoxygenase-activating protein (ALOX5AP).